Here is a 239-residue protein sequence, read N- to C-terminus: Proteasome subunit beta (239 aa).

Over residues 1 to 16 the composition is skewed to polar residues; the sequence is MRQPDSSLPRTGQDHT. The segment at 1-32 is disordered; sequence MRQPDSSLPRTGQDHTLSPYEPELGEVPSNDL. Residues 1–44 constitute a propeptide, removed in mature form; by autocatalysis; it reads MRQPDSSLPRTGQDHTLSPYEPELGEVPSNDLSMADLDNVNKTG. The active-site Nucleophile is Thr-45.

The protein belongs to the peptidase T1B family. As to quaternary structure, the 20S proteasome core is composed of 14 alpha and 14 beta subunits that assemble into four stacked heptameric rings, resulting in a barrel-shaped structure. The two inner rings, each composed of seven catalytic beta subunits, are sandwiched by two outer rings, each composed of seven alpha subunits. The catalytic chamber with the active sites is on the inside of the barrel. Has a gated structure, the ends of the cylinder being occluded by the N-termini of the alpha-subunits. Is capped at one or both ends by the proteasome regulatory ATPase, PAN.

The protein localises to the cytoplasm. The catalysed reaction is Cleavage of peptide bonds with very broad specificity.. The formation of the proteasomal ATPase PAN-20S proteasome complex, via the docking of the C-termini of PAN into the intersubunit pockets in the alpha-rings, triggers opening of the gate for substrate entry. Interconversion between the open-gate and close-gate conformations leads to a dynamic regulation of the 20S proteasome proteolysis activity. In terms of biological role, component of the proteasome core, a large protease complex with broad specificity involved in protein degradation. This chain is Proteasome subunit beta, found in Natronomonas pharaonis (strain ATCC 35678 / DSM 2160 / CIP 103997 / JCM 8858 / NBRC 14720 / NCIMB 2260 / Gabara) (Halobacterium pharaonis).